The sequence spans 620 residues: Chaperone protein HscA homolog (620 aa).

This sequence belongs to the heat shock protein 70 family.

Chaperone involved in the maturation of iron-sulfur cluster-containing proteins. Has a low intrinsic ATPase activity which is markedly stimulated by HscB. The chain is Chaperone protein HscA homolog from Neisseria meningitidis serogroup A / serotype 4A (strain DSM 15465 / Z2491).